The primary structure comprises 748 residues: Putative transmembrane protein ORF88 (748 aa).

Residues 1 to 20 (MIIMKSIILLLAWFLTKTQA) form the signal peptide. Residues 21–723 (NMLTESLYLS…LNLAPFKTLS (703 aa)) are Extracellular-facing. N-linked (GlcNAc...) asparagine; by host glycosylation is found at asparagine 55, asparagine 78, asparagine 99, asparagine 152, asparagine 189, asparagine 390, asparagine 467, and asparagine 499. The interval 531-574 (LTFDSPPPPPTTTQAPPPPPTTTQAPPPPPTTTQAPPPPIVINT) is disordered. Over residues 535 to 570 (SPPPPPTTTQAPPPPPTTTQAPPPPPTTTQAPPPPI) the composition is skewed to pro residues. Residues asparagine 573, asparagine 584, asparagine 599, asparagine 612, and asparagine 617 are each glycosylated (N-linked (GlcNAc...) asparagine; by host). Residues 650-680 (PSIGRAPIPPPDVPVEPPRSIPTTNAPSPEE) form a disordered region. Positions 656 to 669 (PIPPPDVPVEPPRS) are enriched in pro residues. The chain crosses the membrane as a helical span at residues 724–744 (YAGIGVVSFALLFTILVVCLI). The Cytoplasmic portion of the chain corresponds to 745–748 (KFSI).

The protein resides in the host membrane. This chain is Putative transmembrane protein ORF88, found in Magallana gigas (Pacific oyster).